The primary structure comprises 236 residues: Ascorbate-specific transmembrane electron transporter 2 (236 aa).

Topologically, residues 1–13 (MGLGLGVRAAPFT) are cytoplasmic. A helical membrane pass occupies residues 14–34 (YAAHALAVAAAAMVLVWAIYF). The 205-residue stretch at 15 to 219 (AAHALAVAAA…FGASVVVAAI (205 aa)) folds into the Cytochrome b561 domain. The Extracellular portion of the chain corresponds to 35–50 (RGGLAIEATNKNLIFN). Residues 51-71 (VHPVLMLIGYIIIGGEAIMVY) form a helical membrane-spanning segment. Residue His-52 coordinates heme b. Residue 67–75 (AIMVYRVLP) participates in L-ascorbate binding. Topologically, residues 72 to 84 (RVLPTSNHETNKL) are cytoplasmic. A helical membrane pass occupies residues 85–105 (IHLVLHGIALVLGAVGIYFAF). 2 residues coordinate heme b: His-86 and His-120. Over 106–122 (KNHNESGIANLYSLHSW) the chain is Extracellular. 116–125 (LYSLHSWIGI) is a binding site for monodehydro-L-ascorbate radical. Residues 123–143 (IGIGTITLYGIQWIVGFVTFF) form a helical membrane-spanning segment. The Cytoplasmic portion of the chain corresponds to 144 to 153 (FPGAAPNVKK). A helical transmembrane segment spans residues 154–174 (GVLPWHILFGLFVYILALANA). Residue His-159 coordinates heme b. Residues 175-201 (ELGFLEKLTFLESSGLDKYGTEAFLVN) lie on the Extracellular side of the membrane. The chain crosses the membrane as a helical span at residues 202-222 (FTALVVVLFGASVVVAAIAPV). Over 223–236 (RLEEPQGYVPIPEN) the chain is Cytoplasmic.

It depends on heme b as a cofactor.

It localises to the membrane. In terms of biological role, two-heme-containing cytochrome. Catalyzes ascorbate-dependent trans-membrane electron transfer by utilizing a concerted H(+)/e(-) transfer mechanism. This Zea mays (Maize) protein is Ascorbate-specific transmembrane electron transporter 2.